A 264-amino-acid chain; its full sequence is Thiazole synthase (264 aa).

Residue K106 is the Schiff-base intermediate with DXP of the active site. Residues G167, 193–194 (AG), and 215–216 (NT) contribute to the 1-deoxy-D-xylulose 5-phosphate site.

This sequence belongs to the ThiG family. Homotetramer. Forms heterodimers with either ThiH or ThiS.

Its subcellular location is the cytoplasm. It catalyses the reaction [ThiS sulfur-carrier protein]-C-terminal-Gly-aminoethanethioate + 2-iminoacetate + 1-deoxy-D-xylulose 5-phosphate = [ThiS sulfur-carrier protein]-C-terminal Gly-Gly + 2-[(2R,5Z)-2-carboxy-4-methylthiazol-5(2H)-ylidene]ethyl phosphate + 2 H2O + H(+). It functions in the pathway cofactor biosynthesis; thiamine diphosphate biosynthesis. Catalyzes the rearrangement of 1-deoxy-D-xylulose 5-phosphate (DXP) to produce the thiazole phosphate moiety of thiamine. Sulfur is provided by the thiocarboxylate moiety of the carrier protein ThiS. In vitro, sulfur can be provided by H(2)S. The sequence is that of Thiazole synthase from Xanthomonas campestris pv. campestris (strain 8004).